Here is a 240-residue protein sequence, read N- to C-terminus: Splicing factor rtf2 (240 aa).

Disordered regions lie at residues 1–22 (MGNDGGSLPTRNELVKEPGKVP) and 181–240 (SLNK…RVKI). Over residues 185–210 (ASKKSNKNGDKKRKHVSKSNSKHAKH) the composition is skewed to basic residues. Composition is skewed to basic and acidic residues over residues 211–224 (ELRTNRMLDGENVK) and 231–240 (DMERVKRVKI).

This sequence belongs to the rtf2 family. Interacts with pcn1.

It is found in the nucleus. Its function is as follows. Putative splicing factor that is required for the correct splicing of a subset of pre-mRNAs. Required for the correct splicing of rtf1, a replication termination factor that mediates site-specific replication termination at replication barrier RTS1. The sequence is that of Splicing factor rtf2 from Schizosaccharomyces pombe (strain 972 / ATCC 24843) (Fission yeast).